Here is a 341-residue protein sequence, read N- to C-terminus: Farnesyl pyrophosphate synthase (341 aa).

Lysine 48, arginine 51, and glutamine 86 together coordinate isopentenyl diphosphate. Mg(2+)-binding residues include aspartate 93 and aspartate 97. Arginine 102 provides a ligand contact to dimethylallyl diphosphate. Isopentenyl diphosphate is bound at residue arginine 103. The dimethylallyl diphosphate site is built by lysine 190, threonine 191, glutamine 229, and lysine 246.

The protein belongs to the FPP/GGPP synthase family. It depends on Mg(2+) as a cofactor.

It localises to the cytoplasm. The catalysed reaction is isopentenyl diphosphate + dimethylallyl diphosphate = (2E)-geranyl diphosphate + diphosphate. The enzyme catalyses isopentenyl diphosphate + (2E)-geranyl diphosphate = (2E,6E)-farnesyl diphosphate + diphosphate. The protein operates within isoprenoid biosynthesis; farnesyl diphosphate biosynthesis; farnesyl diphosphate from geranyl diphosphate and isopentenyl diphosphate: step 1/1. It participates in isoprenoid biosynthesis; geranyl diphosphate biosynthesis; geranyl diphosphate from dimethylallyl diphosphate and isopentenyl diphosphate: step 1/1. Functionally, catalyzes the sequential condensation of isopentenyl pyrophosphate with the allylic pyrophosphates, dimethylallyl pyrophosphate, and then with the resultant geranylpyrophosphate to the ultimate product farnesyl pyrophosphate. This is Farnesyl pyrophosphate synthase (FPS1) from Helianthus annuus (Common sunflower).